Reading from the N-terminus, the 282-residue chain is Aminoglycoside 6-adenylyltransferase (282 aa).

It carries out the reaction streptomycin + ATP = 6-O-adenylylstreptomycin + diphosphate. Required for streptomycin resistance. Adenylates streptomycin on the O-6 residue. This is Aminoglycoside 6-adenylyltransferase from Staphylococcus aureus.